We begin with the raw amino-acid sequence, 216 residues long: Large ribosomal subunit protein uL24m (216 aa).

The N-terminal 9 residues, 1–9 (MRLSALLAL), are a transit peptide targeting the mitochondrion. Residue serine 24 is modified to Phosphoserine. The 34-residue stretch at 56–89 (LFCGDTVEILEGKDAGKQGKVVQVIRQRNWVVVG) folds into the KOW domain.

Belongs to the universal ribosomal protein uL24 family. In terms of assembly, component of the mitochondrial large ribosomal subunit (mt-LSU). Mature mammalian 55S mitochondrial ribosomes consist of a small (28S) and a large (39S) subunit. The 28S small subunit contains a 12S ribosomal RNA (12S mt-rRNA) and 30 different proteins. The 39S large subunit contains a 16S rRNA (16S mt-rRNA), a copy of mitochondrial valine transfer RNA (mt-tRNA(Val)), which plays an integral structural role, and 52 different proteins.

The protein resides in the mitochondrion. The protein is Large ribosomal subunit protein uL24m (MRPL24) of Homo sapiens (Human).